A 128-amino-acid chain; its full sequence is MSWAAPDDIFFSTSLAAYLDKKLLVLLRDGRKLMGLLRSFDQFANAVLEEAYERVIVGDLYCDIPLGLYIIRGENVVLIGELDVEKEELPAHMVQVPEAEIKRAQKAEKEEMLLKGTMRKRMEFLDLD.

Positions 10-85 (FFSTSLAAYL…VVLIGELDVE (76 aa)) constitute a Sm domain.

Belongs to the snRNP Sm proteins family. As to quaternary structure, component of the heptameric LSM1-LSM7 complex that forms a seven-membered ring structure with a donut shape. The LSM subunits are arranged in the order LSM1, LSM2, LSM3, LSM6, LSM5, LSM7 and LSM4. LSM1A subunit interacts only with its two neighboring subunits, LSM2 and LSM4. In terms of tissue distribution, expressed in roots, leaves, stems, flowers and siliques.

The protein resides in the cytoplasm. Its subcellular location is the P-body. Functionally, component of the cytoplasmic LSM1-LSM7 complex which is involved in mRNA degradation by promoting decapping and leading to accurate 5'-3' mRNA decay. LSM1A and LSM1B are essential for the formation of the cytoplasmic LSM1-LSM7 complex which regulates developmental gene expression by the decapping of specific development-related transcripts. Required for P-body formation during heat stress. The sequence is that of Sm-like protein LSM1A from Arabidopsis thaliana (Mouse-ear cress).